A 454-amino-acid polypeptide reads, in one-letter code: ABSCISIC ACID-INSENSITIVE 5-like protein 6 (454 aa).

S32, S55, and S126 each carry phosphoserine. T169 carries the post-translational modification Phosphothreonine. A bZIP domain is found at 372-435; that stretch reads IERRQKRMIK…KNQLLEPLRQ (64 aa). The tract at residues 374 to 393 is basic motif; it reads RRQKRMIKNRESAARSRARK. The segment at 400–414 is leucine-zipper; sequence LEAEIAQLKELNEEL.

It belongs to the bZIP family. ABI5 subfamily. As to quaternary structure, DNA-binding heterodimer. Interacts with ABI3 and the AFP proteins AFP1, AFP2, AFP3 and AFP4. In terms of tissue distribution, expressed in roots and flowers.

It is found in the nucleus. In terms of biological role, binds to the ABA-responsive element (ABRE). Mediates stress-responsive ABA signaling. This chain is ABSCISIC ACID-INSENSITIVE 5-like protein 6 (ABF3), found in Arabidopsis thaliana (Mouse-ear cress).